The following is a 1033-amino-acid chain: RNA cytidine acetyltransferase (1033 aa).

ATP-binding positions include 285-294 (GRGKSAALGL) and arginine 465. An N-acetyltransferase domain is found at 560–694 (VDLKNPKLPD…IHVRDAKTMP (135 aa)). Residues 626–628 (IAV), 633–639 (VKMGYGT), and arginine 727 each bind acetyl-CoA. The tract at residues 988 to 1033 (ENQIQKTNGKGARVVSIKGEKRKNNSLDASDKKTKEKPSSKKKFRK) is disordered. Over residues 1005–1026 (KGEKRKNNSLDASDKKTKEKPS) the composition is skewed to basic and acidic residues.

The protein belongs to the RNA cytidine acetyltransferase family. NAT10 subfamily. Interacts with tan1.

The protein localises to the nucleus. It localises to the nucleolus. It catalyses the reaction a cytidine in 18S rRNA + acetyl-CoA + ATP + H2O = an N(4)-acetylcytidine in 18S rRNA + ADP + phosphate + CoA + H(+). It carries out the reaction a cytidine in tRNA + acetyl-CoA + ATP + H2O = an N(4)-acetylcytidine in tRNA + ADP + phosphate + CoA + H(+). RNA cytidine acetyltransferase with specificity toward both 18S rRNA and tRNAs. Catalyzes the formation of N(4)-acetylcytidine (ac4C) at positions 1297 and 1815 in 18S rRNA. Required for early nucleolar cleavages of precursor rRNA at sites A0, A1 and A2 during 18S rRNA synthesis. Catalyzes the formation of ac4C in serine and leucine tRNAs. Requires the tRNA-binding adapter protein tan1 for full tRNA acetyltransferase activity but not for 18S rRNA acetylation. This Schizosaccharomyces pombe (strain 972 / ATCC 24843) (Fission yeast) protein is RNA cytidine acetyltransferase.